The sequence spans 267 residues: MATKILSLLALLALFASATNASIIPQCSLAPSSIIPQFLPPVTSMAFEHPAVQAYRLQQAIAASVLQQPIAQLQQQSLAHLTIQTIATQQQQQQFLPALSHLAMVNPVAYLQQQLLASNPLALANVVANQQQQQLQQFLPALSQLAMVNPAAYLQQQQLLSSSPLAVANAPTYLQQELLQQIVPALTQLAVANPVAYLQQLLPFNQLTMSNSVAYLQQRQQLLNPLAVANPLVAAFLQQQQLLPYNRFSLMNPVLSRQQPIVGGAIF.

An N-terminal signal peptide occupies residues 1 to 21 (MATKILSLLALLALFASATNA).

Belongs to the zein family.

In terms of biological role, zeins are major seed storage proteins. The polypeptide is 22 kDa alpha-zein 14 (Zea mays (Maize)).